Reading from the N-terminus, the 335-residue chain is Glyceraldehyde-3-phosphate dehydrogenase, cytosolic (335 aa).

Residues 13–14 (RI), D35, and R80 contribute to the NAD(+) site. D-glyceraldehyde 3-phosphate-binding positions include 151 to 153 (SCT), T182, 211 to 212 (TG), and R234. Residue C152 is the Nucleophile of the active site. An NAD(+)-binding site is contributed by N316.

This sequence belongs to the glyceraldehyde-3-phosphate dehydrogenase family. In terms of assembly, homotetramer.

The protein localises to the cytoplasm. It catalyses the reaction D-glyceraldehyde 3-phosphate + phosphate + NAD(+) = (2R)-3-phospho-glyceroyl phosphate + NADH + H(+). It participates in carbohydrate degradation; glycolysis; pyruvate from D-glyceraldehyde 3-phosphate: step 1/5. This is Glyceraldehyde-3-phosphate dehydrogenase, cytosolic (GAPC) from Gracilaria gracilis (Red alga).